A 133-amino-acid chain; its full sequence is MVDAFLGTWKLVDSKNFDDYMKSLGVGFATRQVASMTKPTTIIEKNGDILTLKTHSTFKNTEISFKLGVEFDETTADDRKVKSIVTLDGGKLVHLQKWDGQETTLVRELIDGKLILTLTHGTAVCTRTYEKEA.

At Val2 the chain carries N-acetylvaline. Thr8 bears the Phosphothreonine mark. Tyr20 bears the Phosphotyrosine; by Tyr-kinases mark. Position 23 is a phosphoserine (Ser23). Thr30 is subject to Phosphothreonine. The residue at position 83 (Ser83) is a Phosphoserine. Position 127–129 (127–129) interacts with (9Z)-octadecenoate; it reads RTY. 127–129 is a binding site for hexadecanoate; sequence RTY. 127–129 lines the octadecanoate pocket; sequence RTY.

It belongs to the calycin superfamily. Fatty-acid binding protein (FABP) family.

The protein resides in the cytoplasm. Functionally, FABPs are thought to play a role in the intracellular transport of long-chain fatty acids and their acyl-CoA esters. The polypeptide is Fatty acid-binding protein, heart (FABP3) (Homo sapiens (Human)).